Consider the following 258-residue polypeptide: Aspartate/glutamate leucyltransferase (258 aa).

This sequence belongs to the R-transferase family. Bpt subfamily.

The protein localises to the cytoplasm. It carries out the reaction N-terminal L-glutamyl-[protein] + L-leucyl-tRNA(Leu) = N-terminal L-leucyl-L-glutamyl-[protein] + tRNA(Leu) + H(+). The catalysed reaction is N-terminal L-aspartyl-[protein] + L-leucyl-tRNA(Leu) = N-terminal L-leucyl-L-aspartyl-[protein] + tRNA(Leu) + H(+). Its function is as follows. Functions in the N-end rule pathway of protein degradation where it conjugates Leu from its aminoacyl-tRNA to the N-termini of proteins containing an N-terminal aspartate or glutamate. This is Aspartate/glutamate leucyltransferase from Rhodopseudomonas palustris (strain BisB18).